The following is a 454-amino-acid chain: tRNA-2-methylthio-N(6)-dimethylallyladenosine synthase (454 aa).

One can recognise an MTTase N-terminal domain in the interval 6-122 (RHYHITTFGC…LKDLLESVFD (117 aa)). C15, C51, C85, C157, C161, and C164 together coordinate [4Fe-4S] cluster. The Radical SAM core domain maps to 143 to 381 (RDSKVTAWVN…HLGNLKVAER (239 aa)). In terms of domain architecture, TRAM spans 383 to 447 (QRYFGRIEEV…PFSLTGQPVE (65 aa)).

It belongs to the methylthiotransferase family. MiaB subfamily. As to quaternary structure, monomer. The cofactor is [4Fe-4S] cluster.

Its subcellular location is the cytoplasm. It carries out the reaction N(6)-dimethylallyladenosine(37) in tRNA + (sulfur carrier)-SH + AH2 + 2 S-adenosyl-L-methionine = 2-methylsulfanyl-N(6)-dimethylallyladenosine(37) in tRNA + (sulfur carrier)-H + 5'-deoxyadenosine + L-methionine + A + S-adenosyl-L-homocysteine + 2 H(+). Functionally, catalyzes the methylthiolation of N6-(dimethylallyl)adenosine (i(6)A), leading to the formation of 2-methylthio-N6-(dimethylallyl)adenosine (ms(2)i(6)A) at position 37 in tRNAs that read codons beginning with uridine. This chain is tRNA-2-methylthio-N(6)-dimethylallyladenosine synthase, found in Nostoc punctiforme (strain ATCC 29133 / PCC 73102).